The sequence spans 201 residues: uncharacterized protein (201 aa).

Belongs to the phosphatidylethanolamine-binding protein family.

This is an uncharacterized protein from Saccharomyces cerevisiae (strain ATCC 204508 / S288c) (Baker's yeast).